Here is a 351-residue protein sequence, read N- to C-terminus: Fe(3+) ions import ATP-binding protein FbpC (351 aa).

An ABC transporter domain is found at 7-237 (VVLKNVCKRF…PSSMFMANFM (231 aa)). 39–46 (GPSGCGKT) provides a ligand contact to ATP.

It belongs to the ABC transporter superfamily. Fe(3+) ion importer (TC 3.A.1.10) family. The complex is composed of two ATP-binding proteins (FbpC), two transmembrane proteins (FbpB) and a solute-binding protein (FbpA).

The protein localises to the cell inner membrane. The catalysed reaction is Fe(3+)(out) + ATP + H2O = Fe(3+)(in) + ADP + phosphate + H(+). In terms of biological role, part of the ABC transporter complex FbpABC involved in Fe(3+) ions import. Responsible for energy coupling to the transport system. The sequence is that of Fe(3+) ions import ATP-binding protein FbpC from Photobacterium profundum (strain SS9).